The chain runs to 141 residues: MISIGTDLVHIPAFADQLAQPGSSFMDVFGAGERRLASRRAGNRNAEHLAGRWAAKEAFIKAWSQAIYGQPPVIPEEDVQWALIEVRADRWGRVALDIAPSLDTQVRESIGDYTTSLSISHDGDYATAVCVLSYAVATENR.

The Mg(2+) site is built by aspartate 7 and glutamate 57.

This sequence belongs to the P-Pant transferase superfamily. AcpS family. Mg(2+) is required as a cofactor.

The protein localises to the cytoplasm. It carries out the reaction apo-[ACP] + CoA = holo-[ACP] + adenosine 3',5'-bisphosphate + H(+). In terms of biological role, transfers the 4'-phosphopantetheine moiety from coenzyme A to a Ser of acyl-carrier-protein. The chain is Holo-[acyl-carrier-protein] synthase from Corynebacterium efficiens (strain DSM 44549 / YS-314 / AJ 12310 / JCM 11189 / NBRC 100395).